The following is a 236-amino-acid chain: UPF0173 metal-dependent hydrolase AZC_2841 (236 aa).

This sequence belongs to the UPF0173 family.

This chain is UPF0173 metal-dependent hydrolase AZC_2841, found in Azorhizobium caulinodans (strain ATCC 43989 / DSM 5975 / JCM 20966 / LMG 6465 / NBRC 14845 / NCIMB 13405 / ORS 571).